The primary structure comprises 740 residues: Isocitrate dehydrogenase [NADP] 2 (740 aa).

NADP(+)-binding residues include N83 and S85. S130, N133, R137, R143, and K253 together coordinate D-threo-isocitrate. N133 contributes to the NADP(+) binding site. Position 348 (D348) interacts with Mg(2+). Positions 418 and 546 each coordinate D-threo-isocitrate. Residues D547 and D551 each contribute to the Mg(2+) site. Residues S584, H588, R599, D601, and R648 each contribute to the NADP(+) site.

Belongs to the monomeric-type IDH family. As to quaternary structure, monomer. It depends on Mg(2+) as a cofactor. Requires Mn(2+) as cofactor.

The catalysed reaction is D-threo-isocitrate + NADP(+) = 2-oxoglutarate + CO2 + NADPH. IDH activity is not significantly affected by monovalent cations. The combined addition of Mn(2+) and another divalent cation results in the decrease of the activity. In terms of biological role, catalyzes the oxidative decarboxylation of isocitrate to 2-oxoglutarate and carbon dioxide with the concomitant reduction of NADP(+). Cannot use NAD(+). This is Isocitrate dehydrogenase [NADP] 2 from Psychrobacter sp. (strain 13A).